Here is a 253-residue protein sequence, read N- to C-terminus: Zinc finger protein GIS (253 aa).

The span at 1–10 (MDEATGETET) shows a compositional bias: acidic residues. A disordered region spans residues 1-85 (MDEATGETET…GDNSTDNNSI (85 aa)). Composition is skewed to polar residues over residues 11 to 21 (QDFMNVESFSQ), 49 to 63 (SITT…PYQT), and 76 to 85 (GDNSTDNNSI). Residues 91–113 (FECHYCFRNFPTSQALGGHQNAH) form a C2H2-type zinc finger.

Expressed in inflorescence meristems, floral meristems and stem epidermis.

It localises to the nucleus. Probable transcription factor required for the initiation of inflorescence trichomes in response to gibberellin (GA). Mediates the induction of GL1 expression by GA in inflorescence organs and is antagonized in its action by the DELLA repressor GAI. Acts upstream of the trichome initiation regulators GL1 and GL3, and downstream of the GA signaling repressor SPINDLY (SPY). Does not play a significant role in the cytokinin response. Controls trichome branching through GA signaling. Acts downstream of the key regulator STICHEL (STI) in an endoreduplication-independent pathway. Controls trichome cell division indirectly by acting downstream of a key endoreduplication regulator SIAMESE (SIM). This chain is Zinc finger protein GIS (GIS), found in Arabidopsis thaliana (Mouse-ear cress).